Consider the following 44-residue polypeptide: Photosystem II reaction center protein J (44 aa).

A helical membrane pass occupies residues 12 to 32 (IPLWIVGFVVGSLALGLLGIL).

It belongs to the PsbJ family. As to quaternary structure, PSII is composed of 1 copy each of membrane proteins PsbA, PsbB, PsbC, PsbD, PsbE, PsbF, PsbH, PsbI, PsbJ, PsbK, PsbL, PsbM, PsbT, PsbY, PsbZ, Psb30/Ycf12, at least 3 peripheral proteins of the oxygen-evolving complex and a large number of cofactors. It forms dimeric complexes.

Its subcellular location is the plastid. The protein localises to the chloroplast thylakoid membrane. Its function is as follows. One of the components of the core complex of photosystem II (PSII). PSII is a light-driven water:plastoquinone oxidoreductase that uses light energy to abstract electrons from H(2)O, generating O(2) and a proton gradient subsequently used for ATP formation. It consists of a core antenna complex that captures photons, and an electron transfer chain that converts photonic excitation into a charge separation. This Bigelowiella natans (Pedinomonas minutissima) protein is Photosystem II reaction center protein J.